Reading from the N-terminus, the 304-residue chain is Probable WRKY transcription factor 29 (304 aa).

2 disordered regions span residues 76–96 (LPED…GCLL) and 185–236 (YTNE…IPSA). Basic and acidic residues predominate over residues 78-88 (EDSKPFRDDKK). The WRKY DNA-binding region spans 128-194 (KEENLLSDAW…YTNEHNHELP (67 aa)). Composition is skewed to polar residues over residues 196–213 (RRNS…QPKP) and 225–236 (SSPTSNPMIPSA).

The protein belongs to the WRKY group II-e family.

The protein localises to the nucleus. Transcription factor involved in the expression of defense genes in innate immune response of plants. Interacts specifically with the W box (5'-(T)TGAC[CT]-3'), a frequently occurring elicitor-responsive cis-acting element. Activates WRKY 22, SIRK and its own promoters. The sequence is that of Probable WRKY transcription factor 29 (WRKY29) from Arabidopsis thaliana (Mouse-ear cress).